The sequence spans 757 residues: RNA exonuclease 3 (757 aa).

2 disordered regions span residues 56–259 (VKRE…AEHL) and 474–590 (ESLD…CDQA). Over residues 120 to 132 (EGGRAEGAEKKEF) the composition is skewed to basic and acidic residues. Polar residues-rich tracts occupy residues 145–172 (TPHA…SSVS), 202–223 (QPSS…SSPK), and 230–240 (MTTSASPSQSR). 2 stretches are compositionally biased toward low complexity: residues 244 to 253 (RNTSASPSSS) and 474 to 502 (ESLD…KTAS). The span at 503–516 (RPASTPTKSLTSSL) shows a compositional bias: polar residues. 2 stretches are compositionally biased toward basic and acidic residues: residues 543-557 (REPD…RGIG) and 565-581 (SQER…RVRE). In terms of domain architecture, Exonuclease spans 597-751 (VVAVDCEMLY…EDALAALDVV (155 aa)).

This sequence belongs to the REXO1/REXO3 family.

The protein localises to the cytoplasm. It is found in the nucleus. 3' to 5' exoribonuclease required for proper 3' end maturation of MRP RNA and of the U5L snRNA. This Yarrowia lipolytica (strain CLIB 122 / E 150) (Yeast) protein is RNA exonuclease 3 (REX3).